Here is a 699-residue protein sequence, read N- to C-terminus: MSLSRILRYNQRNNKTTASLTAEHAYSDNWAYSVSLGDPTSVGVNMAAKTGEALNKSYDSVFSSLPVADSVPRTDFTASSRDDENTDVQKLTTSWMEKIDTKMPENISKIDSNIISSPMVSKVEARFIVPKGRLRKNSTDFTSSFSNSLSLPKSYGKLIFFTSKKNSSSTKKNLANDISDNKHNNNSSNTIGHNIPVTTATATCDEIACTSTEHEYNVYEEERMFTTRVYSLEDSVSSLSTNPLDDTYSEAVQVNTRHIEDTESTAHIRKHSYTTSLSSIKRLFKITSFSNNNSNSCDHQESTVADDCAISSSLKETTSSPVSTGSFSLMIENEDSDRDQIIQALYSNIEASTDLVSRKYRDLDVVLGEGSGGKVKLVQRVLDNKVFALKEYRSKKKRESERKYIKNIISEYCIASTLKNPNICETLEILYEKGKIFQILEYCEYDLFSLVMSEKMHYEEICCLFKQLINGVKYLHDIGLSHRDLKLDNCVVTRRGILKLIDFGASSVFHYPLSSQMIEANGIVGSDPYLSPEVFYFNEYDPRALDVWSVGIIFFCMITRRFPWKYPKVKDVQFKAFCSGRGVSSFKDLVTRPATDDSNNYDNDGYEEGVIDMGPNFILHRLPEETHKIMRRILEVSPFRRITINGILQDGWIKEIETCQVVGAASPNEASLRIINKGNHIHTNIDQRYAHIGGLHQRT.

A disordered region spans residues 168-193; the sequence is SSTKKNLANDISDNKHNNNSSNTIGH. The segment covering 184 to 193 has biased composition (polar residues); sequence NNNSSNTIGH. In terms of domain architecture, Protein kinase spans 361-653; the sequence is RDLDVVLGEG…INGILQDGWI (293 aa). Residues 367–375 and K390 contribute to the ATP site; that span reads LGEGSGGKV. Residue D484 is the Proton acceptor of the active site.

This sequence belongs to the protein kinase superfamily. Ser/Thr protein kinase family.

It carries out the reaction L-seryl-[protein] + ATP = O-phospho-L-seryl-[protein] + ADP + H(+). The enzyme catalyses L-threonyl-[protein] + ATP = O-phospho-L-threonyl-[protein] + ADP + H(+). In terms of biological role, protein kinase that functions as a regulator in the pheromone-induced mating pathway downstream of mitogen-activated protein kinase (MAPK) FUS3. Diminishes transcriptional induction of genes in response to pheromone signaling. In Saccharomyces cerevisiae (strain ATCC 204508 / S288c) (Baker's yeast), this protein is Serine/threonine-protein kinase PRR2 (PRR2).